We begin with the raw amino-acid sequence, 858 residues long: MKKQFNRMKQLANQTVGRAEKTEVLSEDLLQIERRLDTVRSMCHHSHKRLIACFQGQHGTDAERRHKKLPLTALAQNMQEASAQLEESLLGKMLETCGDAENQLAFELSQHEVFVEKEIMDPLYGIAEVEIPNIQKQRKQLARLVLDWDSVRARWNQAHKSSGTNFQGLPSKIDTLKEEMDEAGNKVEQCKDQLAADMYNFMAKEGEYGKFFVTLLEAQADYHRKALAVLEKALPEMRAHQDKWAEKPAFGTPLEEHLKRSGREIALPIEACVMLLLETGMKEEGLFRIGAGASKLKKLKAALDCSTSHLDEFYSDPHAVAGALKSYLRELPEPLMTFSLYEEWTQVASVQDQDKKLQYLWTTCQKLPPQNFVNFRYLIKFLAKLAQTSDVNKMTPSNIAIVLGPNLLWAKQEGTLAEIAAATSVHVVAVIEPIIQHADWFFPGEVEFNVSEAFVPLATPNSNHSSHTGNDSDSGTLERKRPASMAVMEGDLVKKESFGVKLMDFQAHRRGGTLNRKHISPAFQPPLPPTDGNALAPAGPELPSQSSRADSNSVGGPVPSSSGILEQGLSPGDSSPPKPKDSVSAAAPVAGRNSNQITTVPNQAQTGGNSHQLSVGTAHSAAGPSPHTLRRAVKKPAPAPPKPGNPPPGHPGGQSSPGTGTSPKPSTRSPSPPQQQQQQQQQQQQQQQQQQQQQQQQQQQQQTPGMRRCSSSLPPIQAPNHPPPQPPTQPRLGEQGPEPGPTPPQTPTPPSTPPPAKQNSSQSETTQLHGTLPRPRPVPKPRNRPSVPPPPNPPGTHMGDGGLTPSVPTASRIVTDTNSRVSESLRNIFPEIHSDLASKEVPGHILLDIDNDTESTAL.

A BAR domain is found at 14-246 (QTVGRAEKTE…MRAHQDKWAE (233 aa)). The region spanning 252-442 (TPLEEHLKRS…PIIQHADWFF (191 aa)) is the Rho-GAP domain. The span at 459–475 (TPNSNHSSHTGNDSDSG) shows a compositional bias: polar residues. The segment at 459-482 (TPNSNHSSHTGNDSDSGTLERKRP) is disordered. Ser-484 bears the Phosphoserine mark. A disordered region spans residues 516–823 (RKHISPAFQP…VTDTNSRVSE (308 aa)). Residues 543 to 552 (PSQSSRADSN) show a composition bias toward polar residues. Residues 553-563 (SVGGPVPSSSG) show a composition bias toward low complexity. The residue at position 575 (Ser-575) is a Phosphoserine. Over residues 592-617 (RNSNQITTVPNQAQTGGNSHQLSVGT) the composition is skewed to polar residues. Over residues 637 to 650 (APAPPKPGNPPPGH) the composition is skewed to pro residues. Residues 653–702 (GQSSPGTGTSPKPSTRSPSPPQQQQQQQQQQQQQQQQQQQQQQQQQQQQQ) show a composition bias toward low complexity. Ser-710 and Ser-712 each carry phosphoserine. Composition is skewed to pro residues over residues 716–729 (IQAP…PPTQ) and 738–756 (EPGP…PPPA). Thr-742, Thr-746, and Thr-748 each carry phosphothreonine. An SH3-binding motif is present at residues 742-755 (TPPQTPTPPSTPPP). The residue at position 751 (Ser-751) is a Phosphoserine. Thr-752 carries the post-translational modification Phosphothreonine. The segment covering 757-769 (KQNSSQSETTQLH) has biased composition (polar residues). The segment covering 784-794 (RPSVPPPPNPP) has biased composition (pro residues). Polar residues predominate over residues 806–823 (SVPTASRIVTDTNSRVSE).

In terms of assembly, component of a complex whose core is composed of ARHGAP17, AMOT, PALS1, PATJ and PARD3/PAR3. Interacts with NHERF1, FNBP1, TRIP10, CAPZA (CAPZA1, CAPZA2 or CAPZA3), CAPZB, CD2AP and SH3KBP1/CIN85. As to expression, highly expressed in brain; neuron-specific (at protein level). Isoform 2, isoform 3 and isoform 4 are predominantly expressed in neuronal tissues and correlate well with the differentiation of neurons, while isoform 1 is strongly expressed in embryonic brain.

The protein resides in the membrane. The protein localises to the cytoplasm. It is found in the cell junction. Its subcellular location is the tight junction. Its function is as follows. Rho GTPase-activating protein involved in the maintenance of tight junction by regulating the activity of CDC42, thereby playing a central role in apical polarity of epithelial cells. Specifically acts as a GTPase activator for the CDC42 GTPase by converting it to an inactive GDP-bound state. The complex formed with AMOT acts by regulating the uptake of polarity proteins at tight junctions, possibly by deciding whether tight junction transmembrane proteins are recycled back to the plasma membrane or sent elsewhere. Participates in the Ca(2+)-dependent regulation of exocytosis, possibly by catalyzing GTPase activity of Rho family proteins and by inducing the reorganization of the cortical actin filaments. Acts as a GTPase activator in vitro for RAC1. The sequence is that of Rho GTPase-activating protein 17 (Arhgap17) from Rattus norvegicus (Rat).